Consider the following 509-residue polypeptide: Taxoid 14-beta-hydroxylase (509 aa).

3 consecutive transmembrane segments (helical) span residues 20-40, 186-206, and 218-238; these read AILF…LLFL, SVVA…FFNI, and LLEI…GFAY. Cys-443 lines the heme pocket.

Belongs to the cytochrome P450 family.

It localises to the microsome membrane. The enzyme catalyses 10beta-hydroxytaxa-4(20),11-dien-5alpha-yl acetate + NADPH + O2 + H(+) = 10beta,14beta-dihydroxytaxa-4(20),11-dien-5alpha-yl acetate + NADP(+) + H2O. It participates in alkaloid biosynthesis; taxol biosynthesis. Catalyzes the conversion of 5-alpha-acetoxy-10beta-ol to 5-alpha-acetoxy-10beta,14beta-dihydroxy taxadiene. Also acts on taxa-4(20),11-dien-5-alpha-yl acetate. This is Taxoid 14-beta-hydroxylase from Taxus cuspidata (Japanese yew).